Reading from the N-terminus, the 737-residue chain is Ribosome-releasing factor 2, mitochondrial (737 aa).

The transit peptide at Met-1 to Tyr-29 directs the protein to the mitochondrion. Residues Ser-31 to Glu-310 enclose the tr-type G domain. Residues Ala-40–Thr-47, Asp-104–His-108, and Asn-158–Asp-161 each bind GTP.

Belongs to the TRAFAC class translation factor GTPase superfamily. Classic translation factor GTPase family. EF-G/EF-2 subfamily.

The protein localises to the mitochondrion. Its function is as follows. Mitochondrial GTPase that mediates the disassembly of ribosomes from messenger RNA at the termination of mitochondrial protein biosynthesis. Not involved in the GTP-dependent ribosomal translocation step during translation elongation. The protein is Ribosome-releasing factor 2, mitochondrial of Drosophila persimilis (Fruit fly).